A 137-amino-acid chain; its full sequence is Ribosomal RNA large subunit methyltransferase H (137 aa).

S-adenosyl-L-methionine is bound by residues Leu56, Gly85, and 104-109; that span reads LSPLTL.

The protein belongs to the RNA methyltransferase RlmH family. As to quaternary structure, homodimer.

It localises to the cytoplasm. The enzyme catalyses pseudouridine(1915) in 23S rRNA + S-adenosyl-L-methionine = N(3)-methylpseudouridine(1915) in 23S rRNA + S-adenosyl-L-homocysteine + H(+). Specifically methylates the pseudouridine at position 1915 (m3Psi1915) in 23S rRNA. The chain is Ribosomal RNA large subunit methyltransferase H from Thermus thermophilus (strain ATCC 27634 / DSM 579 / HB8).